A 94-amino-acid polypeptide reads, in one-letter code: Co-chaperonin GroES (94 aa).

Belongs to the GroES chaperonin family. In terms of assembly, heptamer of 7 subunits arranged in a ring. Interacts with the chaperonin GroEL.

Its subcellular location is the cytoplasm. Its function is as follows. Together with the chaperonin GroEL, plays an essential role in assisting protein folding. The GroEL-GroES system forms a nano-cage that allows encapsulation of the non-native substrate proteins and provides a physical environment optimized to promote and accelerate protein folding. GroES binds to the apical surface of the GroEL ring, thereby capping the opening of the GroEL channel. This Streptococcus mitis protein is Co-chaperonin GroES.